Reading from the N-terminus, the 390-residue chain is S-adenosylmethionine:tRNA ribosyltransferase-isomerase (390 aa).

A disordered region spans residues 1–22 (MTQPLSQDQHDSSSNMPTDNAE).

It belongs to the QueA family. Monomer.

Its subcellular location is the cytoplasm. The enzyme catalyses 7-aminomethyl-7-carbaguanosine(34) in tRNA + S-adenosyl-L-methionine = epoxyqueuosine(34) in tRNA + adenine + L-methionine + 2 H(+). Its pathway is tRNA modification; tRNA-queuosine biosynthesis. Its function is as follows. Transfers and isomerizes the ribose moiety from AdoMet to the 7-aminomethyl group of 7-deazaguanine (preQ1-tRNA) to give epoxyqueuosine (oQ-tRNA). This chain is S-adenosylmethionine:tRNA ribosyltransferase-isomerase, found in Psychrobacter sp. (strain PRwf-1).